We begin with the raw amino-acid sequence, 91 residues long: Cytochrome c-554(547) (91 aa).

Positions 15, 18, 19, and 64 each coordinate heme c.

In terms of assembly, monomer. Binds 1 heme c group covalently per subunit.

The polypeptide is Cytochrome c-554(547) (Halothiobacillus neapolitanus (Thiobacillus neapolitanus)).